We begin with the raw amino-acid sequence, 213 residues long: Motile sperm domain-containing protein 1 (213 aa).

The MSP domain occupies 16-143 (PVFVFPTELI…KEHLTESVFF (128 aa)). Helical transmembrane passes span 159–179 (SLLTVFLGVVCIAALMLPTLG) and 191–211 (LSVNQKLVAAYILGLITMAIL). Positions 205–208 (LITM) match the Nuclear export signal motif.

As to expression, widely expressed. Shows highest expression in ribs, and slightly lower levels of expression in heart, kidney, muscle, thymus, calvariae and lung. Also detected at low levels in spleen and liver.

It localises to the endoplasmic reticulum membrane. The protein localises to the golgi apparatus membrane. Functionally, plays a role in differentiation and/or proliferation of mesenchymal stem cells. Proposed to be involved in epithelial-to-mesenchymal transition (EMT). However, another study suggests that it is not required for EMT or stem cell self-renewal and acts during later stages of differentiation. In Mus musculus (Mouse), this protein is Motile sperm domain-containing protein 1 (Mospd1).